The sequence spans 146 residues: Hemoglobin subunit beta (146 aa).

Residue V1 is modified to N-acetylvaline. The region spanning 2 to 146 (HLTPEEKNAV…VANALAHKYH (145 aa)) is the Globin domain. At T12 the chain carries Phosphothreonine. At S44 the chain carries Phosphoserine. The residue at position 59 (K59) is an N6-acetyllysine. Position 63 (H63) interacts with heme b. Residue K82 is modified to N6-acetyllysine. H92 is a heme b binding site. C93 is modified (S-nitrosocysteine). At K144 the chain carries N6-acetyllysine.

This sequence belongs to the globin family. In terms of assembly, heterotetramer of two alpha chains and two beta chains. As to expression, red blood cells.

Functionally, involved in oxygen transport from the lung to the various peripheral tissues. This chain is Hemoglobin subunit beta (HBB), found in Macaca mulatta (Rhesus macaque).